The primary structure comprises 257 residues: 5-oxoprolinase subunit A (257 aa).

The protein belongs to the LamB/PxpA family. As to quaternary structure, forms a complex composed of PxpA, PxpB and PxpC.

It carries out the reaction 5-oxo-L-proline + ATP + 2 H2O = L-glutamate + ADP + phosphate + H(+). Its function is as follows. Catalyzes the cleavage of 5-oxoproline to form L-glutamate coupled to the hydrolysis of ATP to ADP and inorganic phosphate. The protein is 5-oxoprolinase subunit A of Oceanobacillus iheyensis (strain DSM 14371 / CIP 107618 / JCM 11309 / KCTC 3954 / HTE831).